Here is a 183-residue protein sequence, read N- to C-terminus: Outer membrane protein H.8 (183 aa).

The signal sequence occupies residues 1–17 (MKAYLALISAAVIGLAA). Residue C18 is the site of N-palmitoyl cysteine attachment. C18 is lipidated: S-diacylglycerol cysteine. Positions 27 to 51 (AEATPAAEAPASEAPAAEAAPADAA) are disordered. One can recognise a Plastocyanin-like domain in the interval 57–183 (GNCAATVESN…LMNGKVTLVD (127 aa)). Residues H102, C166, H171, and M175 each coordinate Cu cation.

Cu cation is required as a cofactor.

It localises to the cell outer membrane. In Neisseria meningitidis serogroup C / serotype 2a (strain ATCC 700532 / DSM 15464 / FAM18), this protein is Outer membrane protein H.8.